Reading from the N-terminus, the 493-residue chain is Tripartite motif-containing protein 5 (493 aa).

At alanine 2 the chain carries N-acetylalanine. An RING-type zinc finger spans residues 15 to 59 (CPICLELLTQPLSLDCGHSFCQACLTANHKKSMLDKGESSCPVCR). Serine 86 is modified (phosphoserine). The B box-type zinc finger occupies 90-132 (QKVDHCAHHGEKLLLFCQEDGKVICWLCERSQEHRGHHTFLTE). Zn(2+) is bound by residues cysteine 95, histidine 98, cysteine 117, and histidine 123. The stretch at 131–240 (TEEVAREYQV…LISDLERRLQ (110 aa)) forms a coiled coil. The interval 185 to 198 (FEQLRDILDWEESN) is required for interaction with GABARAP and for autophagy. Positions 281 to 493 (LKGMLEVFRE…VPMTLCSPSS (213 aa)) constitute a B30.2/SPRY domain.

The protein belongs to the TRIM/RBCC family. Can form homodimers and homotrimers. In addition to lower-order dimerization, also exhibits a higher-order multimerization and both low- and high-order multimerizations are essential for its restriction activity. Interacts with BTBD1 and BTBD2. Interacts with PSMC4, PSMC5, PSMD7 and HSPA8/HSC70. Interacts (via B30.2/SPRY domain) with HSPA1A/B. Interacts with PSMC2, MAP3K7/TAK1, TAB2 and TAB3. Interacts with SQSTM1. Interacts with TRIM6 and TRIM34. Interacts with ULK1 (phosphorylated form), GABARAP, GABARAPL1, GABARAPL2, MAP1LC3A, MAP1LC3C and BECN1. Post-translationally, degraded in a proteasome-independent fashion in the absence of viral infection but in a proteasome-dependent fashion following exposure to restriction sensitive virus. In terms of processing, autoubiquitinated in a RING finger- and UBE2D2-dependent manner. Monoubiquitinated by TRIM21. Deubiquitinated by Yersinia YopJ. Ubiquitination may not lead to proteasomal degradation.

Its subcellular location is the cytoplasm. It is found in the nucleus. The catalysed reaction is S-ubiquitinyl-[E2 ubiquitin-conjugating enzyme]-L-cysteine + [acceptor protein]-L-lysine = [E2 ubiquitin-conjugating enzyme]-L-cysteine + N(6)-ubiquitinyl-[acceptor protein]-L-lysine.. It participates in protein modification; protein ubiquitination. Functionally, capsid-specific restriction factor that prevents infection from non-host-adapted retroviruses. Blocks viral replication early in the life cycle, after viral entry but before reverse transcription. In addition to acting as a capsid-specific restriction factor, also acts as a pattern recognition receptor that activates innate immune signaling in response to the retroviral capsid lattice. Binding to the viral capsid triggers its E3 ubiquitin ligase activity, and in concert with the heterodimeric ubiquitin conjugating enzyme complex UBE2V1-UBE2N (also known as UBC13-UEV1A complex) generates 'Lys-63'-linked polyubiquitin chains, which in turn are catalysts in the autophosphorylation of the MAP3K7/TAK1 complex (includes TAK1, TAB2, and TAB3). Activation of the MAP3K7/TAK1 complex by autophosphorylation results in the induction and expression of NF-kappa-B and MAPK-responsive inflammatory genes, thereby leading to an innate immune response in the infected cell. Plays a role in regulating autophagy through activation of autophagy regulator BECN1 by causing its dissociation from its inhibitors BCL2 and TAB2. This chain is Tripartite motif-containing protein 5 (TRIM5), found in Pan troglodytes (Chimpanzee).